Consider the following 219-residue polypeptide: 2-hydroxy-3-keto-5-methylthiopentenyl-1-phosphate phosphatase (219 aa).

The protein belongs to the HAD-like hydrolase superfamily. MtnX family.

The enzyme catalyses 2-hydroxy-5-methylsulfanyl-3-oxopent-1-enyl phosphate + H2O = 1,2-dihydroxy-5-(methylsulfanyl)pent-1-en-3-one + phosphate. The protein operates within amino-acid biosynthesis; L-methionine biosynthesis via salvage pathway; L-methionine from S-methyl-5-thio-alpha-D-ribose 1-phosphate: step 4/6. Its function is as follows. Dephosphorylates 2-hydroxy-3-keto-5-methylthiopentenyl-1-phosphate (HK-MTPenyl-1-P) yielding 1,2-dihydroxy-3-keto-5-methylthiopentene (DHK-MTPene). The polypeptide is 2-hydroxy-3-keto-5-methylthiopentenyl-1-phosphate phosphatase (Bacillus cereus (strain 03BB102)).